A 447-amino-acid polypeptide reads, in one-letter code: MNRRHLFAWLFRHLSLNGHLQCHVHRHSHQLTQIPLDTRLWVFRRNRNHTVHRLLNKNCSRRYCHQDTSMLWKHKALQKYMEDLNKEYQTLDHCLHHISASEGDRRSLTRRHAELAPLAVIYKEIQEAEQAIEELESMCKSLNKQDEKQLQELALEERQTIAQKINMLYSELFQSLLPKEKYDKNDVILEVTSGRTTGGDICQQFTREIFDMYQNYSSYKHWRFELLNYTPADYGGLHHAAARISGDNVYKHLKYEGGIHRVQRIPEVGLSSRMQRIHTGTMSVIVLPHPDEVDVKVDPKDLRIDTFRAKGAGGQHVNTTDSAVRLVHIPTGLVVECQQERSQIKNKEIALRVLRARLYQQIIEKDKCQQRSARKLQVGTRAQSERIRTYNFTQDRVTDHRIAYEVRNIKEFLCGEKCLDQLIQRLLQSADEEAITEFLDENLKSVK.

Residues 1–63 constitute a mitochondrion transit peptide; it reads MNRRHLFAWL…LLNKNCSRRY (63 aa). The segment at 299-363 is GGQ domain; it reads PKDLRIDTFR…LRARLYQQII (65 aa). Positions 313–315 match the GGQ motif; sequence GGQ. Gln315 carries the N5-methylglutamine modification.

It belongs to the prokaryotic/mitochondrial release factor family. In terms of processing, methylation of glutamine in the GGQ triplet by HEMK1 is conserved from bacteria to mammals.

It is found in the mitochondrion. Functionally, mitochondrial peptide chain release factor that directs the termination of translation in response to the peptide chain non-canonical stop codons AGG and AGA. Non-canonical termination codons AGG and AGA are found at the end of MT-CO1/COX1 and MT-ND6/ND6 open reading frames, respectively. Recognizes non-canonical stop codons via a network of interactions between the codon, MTRF1 and the ribosomal RNA (rRNA): in contrast to other translation release factors, which identify the codon in the A-site via direct interactions of amino acid side chains with the bases, MTRF1 repositions the first 2 bases of the stop codon to use an intricate network of interactions that includes residues of the release factor, the rRNA of the small ribosomal subunit, as well as neighboring bases of the mRNA. The sequence is that of Peptide chain release factor 1, mitochondrial (MTRF1) from Bos taurus (Bovine).